The sequence spans 114 residues: Iron-sulfur cluster insertion protein ErpA (114 aa).

Iron-sulfur cluster-binding residues include Cys-42, Cys-106, and Cys-108.

This sequence belongs to the HesB/IscA family. In terms of assembly, homodimer. It depends on iron-sulfur cluster as a cofactor.

Required for insertion of 4Fe-4S clusters for at least IspG. In Serratia proteamaculans (strain 568), this protein is Iron-sulfur cluster insertion protein ErpA.